We begin with the raw amino-acid sequence, 417 residues long: Riboflavin biosynthesis protein RibBA (417 aa).

A DHBP synthase region spans residues M1–K204. Residues R28–E29, D33, R141–T145, and E165 contribute to the D-ribulose 5-phosphate site. A Mg(2+)-binding site is contributed by E29. H144 serves as a coordination point for Mg(2+). The tract at residues H205–L417 is GTP cyclohydrolase II. R259 to E263 contacts GTP. Zn(2+)-binding residues include C264, C275, and C277. GTP contacts are provided by residues Q280, E303–R305, and T325. The active-site Proton acceptor; for GTP cyclohydrolase activity is D337. Catalysis depends on R339, which acts as the Nucleophile; for GTP cyclohydrolase activity. 2 residues coordinate GTP: T360 and K365.

In the N-terminal section; belongs to the DHBP synthase family. It in the C-terminal section; belongs to the GTP cyclohydrolase II family. It depends on Mg(2+) as a cofactor. Mn(2+) serves as cofactor. Requires Zn(2+) as cofactor.

The enzyme catalyses D-ribulose 5-phosphate = (2S)-2-hydroxy-3-oxobutyl phosphate + formate + H(+). It carries out the reaction GTP + 4 H2O = 2,5-diamino-6-hydroxy-4-(5-phosphoribosylamino)-pyrimidine + formate + 2 phosphate + 3 H(+). Its pathway is cofactor biosynthesis; riboflavin biosynthesis; 2-hydroxy-3-oxobutyl phosphate from D-ribulose 5-phosphate: step 1/1. It participates in cofactor biosynthesis; riboflavin biosynthesis; 5-amino-6-(D-ribitylamino)uracil from GTP: step 1/4. Functionally, catalyzes the conversion of D-ribulose 5-phosphate to formate and 3,4-dihydroxy-2-butanone 4-phosphate. Catalyzes the conversion of GTP to 2,5-diamino-6-ribosylamino-4(3H)-pyrimidinone 5'-phosphate (DARP), formate and pyrophosphate. This chain is Riboflavin biosynthesis protein RibBA, found in Rhodococcus jostii (strain RHA1).